An 814-amino-acid polypeptide reads, in one-letter code: Rho GTPase-activating protein 26 (814 aa).

The region spanning 7-262 (EFSDCCLDSP…MKENPLEHKT (256 aa)) is the BAR domain. One can recognise a PH domain in the interval 265–369 (PYTMEGYLYV…WMEAMDGREP (105 aa)). The Rho-GAP domain maps to 383–568 (AQLDSIGFSI…ILIENHEKIF (186 aa)). The segment covering 624–648 (LESVSSNPNSILNSSSSLQPNMNSS) has biased composition (low complexity). Positions 624-696 (LESVSSNPNS…MPTSSTSSDS (73 aa)) are disordered. The segment covering 662-672 (SLPPNPSPTSP) has biased composition (pro residues). Residue Ser668 is modified to Phosphoserine. Residue Thr670 is modified to Phosphothreonine. Position 671 is a phosphoserine (Ser671). The segment covering 673–696 (LSPSWPMFSAPSSPMPTSSTSSDS) has biased composition (low complexity). One can recognise an SH3 domain in the interval 756 to 814 (TPFRKAKALYACKAEHDSELSFTAGTVFDNVHPSQEPGWLEGTLNGKTGLIPENYVEFL).

As to quaternary structure, interacts with NYAP1, NYAP2 and MYO16. Interacts with MICAL1 and WDR44. Binds to the C-terminus of PTK2/FAK1. In terms of assembly, (Microbial infection) Interacts with human parainfluenza virus type 2 proteins P and V. In terms of processing, phosphorylated in a PINK1-dependent fashion promoting retrograde mitochondrial trafficking and clustering.

Its subcellular location is the endosome membrane. The protein resides in the cytoplasm. The protein localises to the cell junction. It localises to the focal adhesion. It is found in the cytoskeleton. Its function is as follows. GTPase-activating protein for RHOA and CDC42. Facilitates mitochondrial quality control by promoting Parkin-mediated recruitment of autophagosomes to damaged mitochondria. Negatively regulates the growth of human parainfluenza virus type 2 by inhibiting hPIV-2-mediated RHOA activation via interaction with two of its viral proteins P and V. In terms of biological role, associates with MICAL1 on the endosomal membrane to promote Rab8-Rab10-dependent tubule extension. After dissociation of MICAL1, recruits WDR44 which connects the endoplasmic reticulum (ER) with the endosomal tubule, thereby participating in the export of a subset of neosynthesized proteins. This is Rho GTPase-activating protein 26 (ARHGAP26) from Homo sapiens (Human).